A 486-amino-acid chain; its full sequence is Retrograde regulation protein 3 (486 aa).

Residues 27–35 (ETLDFSLVT) carry the 9aaTAD 1 motif. Polar residues-rich tracts occupy residues 75–94 (NNNL…TAST) and 101–130 (SQSS…IGQG). A disordered region spans residues 75-130 (NNNLMGSQARSNSQTPTASTIYEEAESQSSYLDDMFRTSQGGRPVTQNSISSIGQG). Phosphoserine occurs at positions 81, 123, and 142. A Phosphothreonine modification is found at Thr150. The 9aaTAD 2 motif lies at 189–197 (SSINSDMMT). A phosphoserine mark is found at Ser227, Ser236, and Ser241. The disordered stretch occupies residues 243–274 (RHGSINTPRTRHTSISSNMTENIGPGSVPKIL). Positions 246 to 263 (SINTPRTRHTSISSNMTE) are enriched in polar residues. Ser269 is modified (phosphoserine). Residues 285–344 (RKREFHNAVERRRRELIKQKIKELGQLVPPSLLNYDDLGKQIKPNKGIILDRTVEYLQYL) form the bHLH domain. Residues 374-395 (ALSPFTNNHHASSGQNNSENSE) form a disordered region.

As to quaternary structure, binds DNA as a heterodimer with RTG1.

The protein localises to the nucleus. Functionally, transcription factor that regulates CIT2 gene expression. Binds to two identical sites oriented as inverted repeats 28 bp apart in a regulatory upstream activation sequence element (UASR) in the CIT2 promoter. The core binding site is 5'-GGTCAC-3'. This is Retrograde regulation protein 3 (RTG3) from Saccharomyces cerevisiae (strain ATCC 204508 / S288c) (Baker's yeast).